Consider the following 586-residue polypeptide: MVTTTLPDFKSHCIQLLDQAARQVLPDEVGVQIELLRPKLADHGDYSSNLAMKLARRLRRNPLELAKALIGALPDSSCVEKADVAGGGFINFFLKKTAKQQFLHAVLQAGDSFGHSRLGAGKTIQIEFVSANPTGPLHVGHGRGAAFGASLANIMTAAGYAVTREFYVNDAGRQMDILTLSTWLRYLDLCGLSFSFPANAYRGQYVADMASEIYQAQGDRYAHRSDATIRQLTEISTSTTIDSEDERLDRLITAAKSILDQDYADLHNFVLTEQLADCRNDLMEFGVEFETWFSEQSLFDSGMVARAVQLLDDKKLLYRQDGALWFRSTDFGDEKDRVVQRENGLYTYFASDIAYHLSKYERGFDYLLNIWGADHHGYIPRVKGAIEALSLDPGRLEIALVQFAVLYRDGKKVSMSTRSGEFVTLRQLRQEVGNDAARFFYVLRKSDQHLDFDLDLAKSQSNDNPVYYVQYAHARICSVLGQWGGAEDILARAETELLTDPAELVLLQKMIDFTDTIEAAAKERAPHLIAFFLRELAGEFHSYYNSTRFLVEDESLKITRLALISAVRQILSKGLTLLGVTAPREM.

Positions 131 to 141 (ANPTGPLHVGH) match the 'HIGH' region motif.

The protein belongs to the class-I aminoacyl-tRNA synthetase family. Monomer.

It localises to the cytoplasm. It carries out the reaction tRNA(Arg) + L-arginine + ATP = L-arginyl-tRNA(Arg) + AMP + diphosphate. The protein is Arginine--tRNA ligase of Nitrosomonas europaea (strain ATCC 19718 / CIP 103999 / KCTC 2705 / NBRC 14298).